Consider the following 386-residue polypeptide: Protein phosphatase methylesterase 1 (386 aa).

The interval Met1–Lys38 is disordered. At Ser15 the chain carries Phosphoserine. The residue at position 16 (Arg16) is an Asymmetric dimethylarginine; alternate. An Omega-N-methylarginine; alternate modification is found at Arg16. Residues Ser156 and Asp181 contribute to the active site. The segment covering Ile255 to Ser265 has biased composition (acidic residues). The interval Ile255 to Lys280 is disordered. The segment covering Val268–Lys280 has biased composition (basic and acidic residues). The active site involves His349.

The protein belongs to the AB hydrolase superfamily. In terms of assembly, binds PPP2CA and PPP2CB. Phosphorylated by SIK1 following increases in intracellular sodium, leading to dissociation from the protein phosphatase 2A (PP2A) complex and subsequent dephosphorylation of sodium/potassium-transporting ATPase ATP1A1. Ubiquitous. Highly expressed in testis and brain.

The catalysed reaction is [phosphatase 2A protein]-C-terminal L-leucine methyl ester + H2O = [phosphatase 2A protein]-C-terminal L-leucine + methanol + H(+). Its function is as follows. Demethylates proteins that have been reversibly carboxymethylated. Demethylates PPP2CB (in vitro) and PPP2CA. Binding to PPP2CA displaces the manganese ion and inactivates the enzyme. The chain is Protein phosphatase methylesterase 1 (Ppme1) from Mus musculus (Mouse).